We begin with the raw amino-acid sequence, 66 residues long: Conotoxin Lt5.6 (66 aa).

The signal sequence occupies residues 1–19; the sequence is MLCLPVFIILLLLASPAAP. A propeptide spanning residues 20-54 is cleaved from the precursor; the sequence is KSLETRIQNDLIRAGLTDADLKTEKGFLSGLLNVA.

It belongs to the conotoxin T superfamily. Post-translationally, contains 2 disulfide bonds that can be either 'C1-C3, C2-C4' or 'C1-C4, C2-C3', since these disulfide connectivities have been observed for conotoxins with cysteine framework V (for examples, see AC P0DQQ7 and AC P81755). Expressed by the venom duct.

Its subcellular location is the secreted. This Conus litteratus (Lettered cone) protein is Conotoxin Lt5.6.